We begin with the raw amino-acid sequence, 250 residues long: Hemocyanin, units C and D (250 aa).

His-1 contacts Cu cation. A unit C region spans residues 1 to 106; sequence HGSTKWCPSP…RAWIEPVTSA (106 aa). A disulfide bridge connects residues Cys-7 and Cys-18. The 2'-(S-cysteinyl)-histidine (Cys-His) cross-link spans 19–21; the sequence is CHH. His-21 and His-143 together coordinate Cu cation. The tract at residues 107–250 is unit D; sequence VRIRKNLNDL…DAQDVIYNNH (144 aa). A disulfide bridge links Cys-149 with Cys-160. The segment at residues 161–163 is a cross-link (2'-(S-cysteinyl)-histidine (Cys-His)); that stretch reads CLH. Position 172 (His-172) interacts with Cu cation.

Belongs to the tyrosinase family. Hemocyanin subfamily. In terms of assembly, decamers of large identical subunits (390 kDa), each containing 8 globular oxygen-binding functional units. Requires Cu(2+) as cofactor.

Functionally, hemocyanins are copper-containing oxygen carriers occurring freely dissolved in the hemolymph of many mollusks and arthropods. In Sepia officinalis (Common cuttlefish), this protein is Hemocyanin, units C and D.